An 835-amino-acid polypeptide reads, in one-letter code: Ribosome-releasing factor 2, mitochondrial (835 aa).

Residues 1-50 (MPWCNTRLRTCGASPKIFLRRVRCPVLLHNWTIGRVSSVSKMILRFLRSY) constitute a mitochondrion transit peptide. Positions 57 to 343 (TRVRNIGIIA…AVVDYLPSPA (287 aa)) constitute a tr-type G domain. GTP is bound by residues 66–73 (AHIDAGKT), 131–135 (DTPGH), and 183–186 (NKMD).

This sequence belongs to the TRAFAC class translation factor GTPase superfamily. Classic translation factor GTPase family. EF-G/EF-2 subfamily.

The protein localises to the mitochondrion. Functionally, mitochondrial GTPase that mediates the disassembly of ribosomes from messenger RNA at the termination of mitochondrial protein biosynthesis. Not involved in the GTP-dependent ribosomal translocation step during translation elongation. The polypeptide is Ribosome-releasing factor 2, mitochondrial (Eremothecium gossypii (strain ATCC 10895 / CBS 109.51 / FGSC 9923 / NRRL Y-1056) (Yeast)).